Here is a 339-residue protein sequence, read N- to C-terminus: Probable G-protein coupled receptor 33 (339 aa).

The Extracellular segment spans residues 1–30 (MDLINSSTHVINVSTSLTNSTGVPTPAPKT). N-linked (GlcNAc...) asparagine glycosylation is found at N5, N12, and N19. Residues 31 to 53 (IIAASLFMAFIIGVISNGLYLWM) traverse the membrane as a helical segment. Topologically, residues 54-64 (LQFKMQRTVNT) are cytoplasmic. The chain crosses the membrane as a helical span at residues 65-86 (LLFFHLILSYFISTLILPFMAT). Over 87 to 103 (SFLQDNHWVFGSVLCKA) the chain is Extracellular. A disulfide bridge connects residues C101 and C179. Residues 104 to 124 (FNSTLSVSMFASVFFLSAISV) form a helical membrane-spanning segment. Residues 125–143 (ARYYLILHPVWSQQHRTPH) lie on the Cytoplasmic side of the membrane. Residues 144–165 (WASRIALQIWISATILSIPYLV) traverse the membrane as a helical segment. The Extracellular segment spans residues 166–209 (FRTTHDDHKGRIKCQNNYIVSTDWESKEHQTLGQWIHAACFVGR). A helical membrane pass occupies residues 210 to 230 (FLLGFLLPFLVIIFCYKRVAT). Residues 231–246 (KMKEKGLFKSSKPFKV) lie on the Cytoplasmic side of the membrane. The chain crosses the membrane as a helical span at residues 247–268 (MVTAVISFFVCWMPYHVHSGLV). Topologically, residues 269-283 (LTKSQPLPLHLTLGL) are extracellular. Residues 284–303 (AVVTISFNTVVSPVLYLFTG) form a helical membrane-spanning segment. The Cytoplasmic segment spans residues 304–339 (ENFKVFKKSILALFNSTFSDISSTERTQTLNSETEI).

Belongs to the G-protein coupled receptor 1 family. In terms of tissue distribution, expressed predominantly in lung, spleen and testis.

It is found in the cell membrane. In terms of biological role, orphan receptor; could be a chemoattractant receptor. This Mus musculus (Mouse) protein is Probable G-protein coupled receptor 33 (Gpr33).